A 186-amino-acid chain; its full sequence is Ribosome-recycling factor (186 aa).

This sequence belongs to the RRF family.

It is found in the cytoplasm. Its function is as follows. Responsible for the release of ribosomes from messenger RNA at the termination of protein biosynthesis. May increase the efficiency of translation by recycling ribosomes from one round of translation to another. The sequence is that of Ribosome-recycling factor from Wolinella succinogenes (strain ATCC 29543 / DSM 1740 / CCUG 13145 / JCM 31913 / LMG 7466 / NCTC 11488 / FDC 602W) (Vibrio succinogenes).